The following is a 531-amino-acid chain: O-phosphoserine--tRNA(Cys) ligase (531 aa).

Substrate contacts are provided by residues 189–191 (HMT), 234–236 (SAS), 276–277 (YY), and Asn319.

It belongs to the class-II aminoacyl-tRNA synthetase family. O-phosphoseryl-tRNA(Cys) synthetase subfamily. As to quaternary structure, homotetramer. Interacts with SepCysS.

The catalysed reaction is tRNA(Cys) + O-phospho-L-serine + ATP = O-phospho-L-seryl-tRNA(Cys) + AMP + diphosphate. Catalyzes the attachment of O-phosphoserine (Sep) to tRNA(Cys). The sequence is that of O-phosphoserine--tRNA(Cys) ligase from Methanoculleus marisnigri (strain ATCC 35101 / DSM 1498 / JR1).